Consider the following 100-residue polypeptide: Aspartyl/glutamyl-tRNA(Asn/Gln) amidotransferase subunit C (100 aa).

This sequence belongs to the GatC family. As to quaternary structure, heterotrimer of A, B and C subunits.

The enzyme catalyses L-glutamyl-tRNA(Gln) + L-glutamine + ATP + H2O = L-glutaminyl-tRNA(Gln) + L-glutamate + ADP + phosphate + H(+). The catalysed reaction is L-aspartyl-tRNA(Asn) + L-glutamine + ATP + H2O = L-asparaginyl-tRNA(Asn) + L-glutamate + ADP + phosphate + 2 H(+). In terms of biological role, allows the formation of correctly charged Asn-tRNA(Asn) or Gln-tRNA(Gln) through the transamidation of misacylated Asp-tRNA(Asn) or Glu-tRNA(Gln) in organisms which lack either or both of asparaginyl-tRNA or glutaminyl-tRNA synthetases. The reaction takes place in the presence of glutamine and ATP through an activated phospho-Asp-tRNA(Asn) or phospho-Glu-tRNA(Gln). The polypeptide is Aspartyl/glutamyl-tRNA(Asn/Gln) amidotransferase subunit C (Streptococcus pneumoniae (strain Taiwan19F-14)).